Reading from the N-terminus, the 252-residue chain is Phosphoglycolate phosphatase (252 aa).

The Nucleophile role is filled by D13. Mg(2+) is bound by residues D13, D15, and D192.

The protein belongs to the HAD-like hydrolase superfamily. CbbY/CbbZ/Gph/YieH family. In terms of assembly, monomer. It depends on Mg(2+) as a cofactor. Chloride serves as cofactor.

The catalysed reaction is 2-phosphoglycolate + H2O = glycolate + phosphate. It participates in organic acid metabolism; glycolate biosynthesis; glycolate from 2-phosphoglycolate: step 1/1. Specifically catalyzes the dephosphorylation of 2-phosphoglycolate. Is involved in the dissimilation of the intracellular 2-phosphoglycolate formed during the DNA repair of 3'-phosphoglycolate ends, a major class of DNA lesions induced by oxidative stress. The polypeptide is Phosphoglycolate phosphatase (Shigella sonnei (strain Ss046)).